Here is a 96-residue protein sequence, read N- to C-terminus: U-scoloptoxin(06)-Sm1a (96 aa).

The signal sequence occupies residues 1 to 23; the sequence is MNSFSFFLVIFVVLNLQVAKLMA.

This sequence belongs to the scoloptoxin-06 family. Contains 2 disulfide bonds. In terms of tissue distribution, expressed by the venom gland.

Its subcellular location is the secreted. The chain is U-scoloptoxin(06)-Sm1a from Scolopendra morsitans (Tanzanian blue ringleg centipede).